Reading from the N-terminus, the 257-residue chain is Phosphate import ATP-binding protein PstB (257 aa).

The 242-residue stretch at 11–252 folds into the ABC transporter domain; that stretch reads IQVRDLNFYY…PAKKQTEDYI (242 aa). 43–50 provides a ligand contact to ATP; the sequence is GPSGSGKS.

The protein belongs to the ABC transporter superfamily. Phosphate importer (TC 3.A.1.7) family. As to quaternary structure, the complex is composed of two ATP-binding proteins (PstB), two transmembrane proteins (PstC and PstA) and a solute-binding protein (PstS).

It is found in the cell inner membrane. The catalysed reaction is phosphate(out) + ATP + H2O = ADP + 2 phosphate(in) + H(+). Part of the ABC transporter complex PstSACB involved in phosphate import. Responsible for energy coupling to the transport system. This is Phosphate import ATP-binding protein PstB from Salmonella choleraesuis (strain SC-B67).